Here is a 132-residue protein sequence, read N- to C-terminus: Bombinin-like peptides (132 aa).

Residues 1 to 18 form the signal peptide; it reads MNFKYIIAVSFLIASAYA. Positions 19–42 are excised as a propeptide; it reads RSEEYDIQSLSQRDVLEEESLRKI. F68 is modified (phenylalanine amide). Positions 72–112 are excised as a propeptide; it reads TAEDHEVMKRLEAAMRDLDSLDYPEEASERETRGFNQEEKE. At L131 the chain carries Leucine amide.

This sequence belongs to the bombinin family. Expressed by the skin glands.

It is found in the secreted. Its function is as follows. Has antimicrobial activity against Gram-negative bacterium E.coli (MIC=26.3 uM), Gram-positive bacterium S.aureus (MIC=26.3 uM) and yeast C.albicans (MIC=52.5 uM). Has moderate hemolytic activity towards human erythrocytes at a concentration of 52.2 uM. In terms of biological role, has no antimicrobial activity at concentrations up to 161 uM. Has moderate hemolytic activity towards human erythrocytes at a concentration of 40.3 uM. The chain is Bombinin-like peptides from Bombina orientalis (Oriental fire-bellied toad).